The following is a 383-amino-acid chain: 2-aminoethylphosphonate--pyruvate transaminase (383 aa).

Lys192 is modified (N6-(pyridoxal phosphate)lysine).

It belongs to the class-V pyridoxal-phosphate-dependent aminotransferase family. PhnW subfamily. Homodimer. Pyridoxal 5'-phosphate serves as cofactor.

It catalyses the reaction (2-aminoethyl)phosphonate + pyruvate = phosphonoacetaldehyde + L-alanine. Functionally, involved in phosphonate degradation. The polypeptide is 2-aminoethylphosphonate--pyruvate transaminase (Rhizobium meliloti (strain 1021) (Ensifer meliloti)).